A 174-amino-acid polypeptide reads, in one-letter code: Micrococcal nuclease (174 aa).

The N-terminal stretch at 1-23 (MKSALAALRAVAAAVVLIVSVPA) is a signal peptide. Residues R52, E60, and R94 contribute to the active site.

The protein belongs to the thermonuclease family.

It carries out the reaction Endonucleolytic cleavage to nucleoside 3'-phosphates and 3'-phosphooligonucleotide end-products.. This chain is Micrococcal nuclease (nuc), found in Shigella flexneri.